Consider the following 268-residue polypeptide: Ribosomal RNA small subunit methyltransferase A (268 aa).

The S-adenosyl-L-methionine site is built by Asn16, Leu18, Gly43, Glu64, Asp89, and Asn110.

The protein belongs to the class I-like SAM-binding methyltransferase superfamily. rRNA adenine N(6)-methyltransferase family. RsmA subfamily.

It localises to the cytoplasm. The enzyme catalyses adenosine(1518)/adenosine(1519) in 16S rRNA + 4 S-adenosyl-L-methionine = N(6)-dimethyladenosine(1518)/N(6)-dimethyladenosine(1519) in 16S rRNA + 4 S-adenosyl-L-homocysteine + 4 H(+). In terms of biological role, specifically dimethylates two adjacent adenosines (A1518 and A1519) in the loop of a conserved hairpin near the 3'-end of 16S rRNA in the 30S particle. May play a critical role in biogenesis of 30S subunits. The sequence is that of Ribosomal RNA small subunit methyltransferase A from Pseudomonas aeruginosa (strain ATCC 15692 / DSM 22644 / CIP 104116 / JCM 14847 / LMG 12228 / 1C / PRS 101 / PAO1).